The following is a 466-amino-acid chain: Fez family zinc finger protein 1 (466 aa).

The short motif at 34-49 is the Engrailed homology 1 repressor element; that stretch reads PLAFSIERIMSRTPEP. 6 consecutive C2H2-type zinc fingers follow at residues 261 to 283, 289 to 311, 317 to 339, 345 to 367, 373 to 395, and 401 to 424; these read FTCEVCGKVFNAHYNLTRHMPVH, FVCKICGKGFRQASTLCRHKIIH, HKCNQCGKAFNRSSTLNTHTRIH, FVCEFCGKGFHQKGNYKNHKLTH, FKCNICNKAFHQIYNLTFHMHTH, and FTCPTCGKGFCRNFDLKKHVRKLH. The interval 446 to 466 is disordered; it reads LPNREQSHTIIQSPQLQKSVY. Polar residues predominate over residues 453–466; it reads HTIIQSPQLQKSVY.

It belongs to the krueppel C2H2-type zinc-finger protein family.

Its subcellular location is the nucleus. In terms of biological role, transcription repressor. Involved in the development of the forebrain region. The polypeptide is Fez family zinc finger protein 1 (fezf1) (Xenopus laevis (African clawed frog)).